The chain runs to 146 residues: Transcriptional regulator MraZ (146 aa).

SpoVT-AbrB domains follow at residues 4-46 (SYEK…SKKS) and 75-118 (TIEV…SKEK).

This sequence belongs to the MraZ family. Forms oligomers.

It localises to the cytoplasm. The protein resides in the nucleoid. This Mycoplasma mobile (strain ATCC 43663 / 163K / NCTC 11711) (Mesomycoplasma mobile) protein is Transcriptional regulator MraZ.